The primary structure comprises 378 residues: SWI/SNF-related matrix-associated actin-dependent regulator of chromatin subfamily B member 1 (378 aa).

Positions 1-106 are DNA-binding; that stretch reads MIMALSKTFG…DEKYKAVSIS (106 aa).

This sequence belongs to the SNF5 family. In terms of assembly, component of the multiprotein chromatin-remodeling complexes SWI/SNF. Component of neural progenitors-specific chromatin remodeling complex (npBAF complex) and the neuron-specific chromatin remodeling complex (nBAF complex). Component of the BAF (SWI/SNF) chromatin remodeling complex. Component of the SWI/SNF-B (PBAF) chromatin remodeling complex. Binds to double-stranded DNA.

The protein resides in the nucleus. In terms of biological role, involved in chromatin-remodeling. Core component of the BAF (SWI/SNF) complex. This ATP-dependent chromatin-remodeling complex plays important roles in cell proliferation and differentiation, in cellular antiviral activities and inhibition of tumor formation. Belongs to the neural progenitors-specific chromatin remodeling complex (npBAF complex) and the neuron-specific chromatin remodeling complex (nBAF complex) and may play a role in neural development. In Xenopus tropicalis (Western clawed frog), this protein is SWI/SNF-related matrix-associated actin-dependent regulator of chromatin subfamily B member 1 (smarcb1).